Reading from the N-terminus, the 258-residue chain is Uridylate cyclase (258 aa).

One can recognise a Guanylate cyclase domain in the interval 50–190; that stretch reads AAIFIDLRGS…DVVNKASKMC (141 aa). Residue phenylalanine 53 participates in a ribonucleoside 5'-triphosphate binding. 2 residues coordinate Mn(2+): aspartate 55 and aspartate 102.

The protein belongs to the adenylyl cyclase class-4/guanylyl cyclase family. Pyrimidine cyclase subfamily. As to quaternary structure, homodimer. Mn(2+) is required as a cofactor.

The protein resides in the cytoplasm. It carries out the reaction UTP = 3',5'-cyclic UMP + diphosphate. Functionally, pycsar (pyrimidine cyclase system for antiphage resistance) provides immunity against bacteriophage. The pyrimidine cyclase (PycC) synthesizes cyclic nucleotides in response to infection; these serve as specific second messenger signals. The signals activate the adjacent effector, leading to bacterial cell death and abortive phage infection. A clade C Pycsar system. Its function is as follows. The pyrimidine cyclase gene of a two-gene Pycsar system, weakly generates cyclic UMP (cUMP) from UTP, has little to no activity on ATP, CTP or GTP. Expression of this and adjacent effector GmPycTM (AC P0DV43) probably confers resistance to bacteriophage. The genes are probably only expressed in response to bacteriophage infection. The protein is Uridylate cyclase of Gulbenkiania mobilis.